Here is a 626-residue protein sequence, read N- to C-terminus: Phosphomethylpyrimidine synthase (626 aa).

Positions 92-106 (AREVKPEDNGLKGPD) are enriched in basic and acidic residues. The tract at residues 92–117 (AREVKPEDNGLKGPDRSAGVPPFPNV) is disordered. Residues Asn219, Met248, Tyr277, His313, 333–335 (SRG), 374–377 (DGLR), and Glu413 contribute to the substrate site. His417 serves as a coordination point for Zn(2+). Substrate is bound at residue Tyr440. Residue His481 coordinates Zn(2+). Cys561, Cys564, and Cys569 together coordinate [4Fe-4S] cluster.

It belongs to the ThiC family. Homodimer. [4Fe-4S] cluster serves as cofactor.

The enzyme catalyses 5-amino-1-(5-phospho-beta-D-ribosyl)imidazole + S-adenosyl-L-methionine = 4-amino-2-methyl-5-(phosphooxymethyl)pyrimidine + CO + 5'-deoxyadenosine + formate + L-methionine + 3 H(+). It participates in cofactor biosynthesis; thiamine diphosphate biosynthesis. Catalyzes the synthesis of the hydroxymethylpyrimidine phosphate (HMP-P) moiety of thiamine from aminoimidazole ribotide (AIR) in a radical S-adenosyl-L-methionine (SAM)-dependent reaction. The sequence is that of Phosphomethylpyrimidine synthase from Novosphingobium aromaticivorans (strain ATCC 700278 / DSM 12444 / CCUG 56034 / CIP 105152 / NBRC 16084 / F199).